Reading from the N-terminus, the 443-residue chain is Multidrug resistance protein MdtA (443 aa).

The N-terminal stretch at Met-1–Ala-24 is a signal peptide. Residues Asp-36–Val-46 show a composition bias toward polar residues. Disordered regions lie at residues Asp-36–Arg-57 and Thr-398–Ser-443. Basic and acidic residues predominate over residues Ala-409 to Ala-419. Residues Ser-427 to Ser-443 are compositionally biased toward low complexity.

The protein belongs to the membrane fusion protein (MFP) (TC 8.A.1) family. Part of a tripartite efflux system composed of MdtA, MdtB and MdtC.

Its subcellular location is the cell inner membrane. This chain is Multidrug resistance protein MdtA, found in Yersinia enterocolitica serotype O:8 / biotype 1B (strain NCTC 13174 / 8081).